The sequence spans 539 residues: Chaperone Ric-8A (539 aa).

A disordered region spans residues 507–539 (MGITPSGNLAPMENAIRDMADERSSSDSDLGLD). Residues 521-532 (AIRDMADERSSS) show a composition bias toward basic and acidic residues.

Belongs to the synembryn family.

The protein localises to the cytoplasm. It localises to the cell cortex. Functionally, chaperone that specifically binds and folds nascent G alpha proteins prior to G protein heterotrimer formation, promoting their stability and activity: folds GNAI1, GNAO1, GNA13 and GNAQ. Does not fold G(s) G-alpha proteins GNAS nor GNAL. Also acts as a guanine nucleotide exchange factor (GEF) for G alpha proteins by stimulating exchange of bound GDP for free GTP. This Gallus gallus (Chicken) protein is Chaperone Ric-8A (RIC8A).